The following is a 648-amino-acid chain: DNA ligase (648 aa).

NAD(+) is bound by residues 30-34 and 79-80; these read DEEYD and SQ. The active-site N6-AMP-lysine intermediate is the Lys-110. The NAD(+) site is built by Arg-131, Glu-165, Lys-280, and Lys-304. Residues Cys-398, Cys-401, Cys-414, and Cys-419 each contribute to the Zn(2+) site. The BRCT domain occupies 573–648; sequence VSENPFKNKT…LTEEEMNSLF (76 aa).

This sequence belongs to the NAD-dependent DNA ligase family. LigA subfamily. It depends on Mg(2+) as a cofactor. The cofactor is Mn(2+).

It carries out the reaction NAD(+) + (deoxyribonucleotide)n-3'-hydroxyl + 5'-phospho-(deoxyribonucleotide)m = (deoxyribonucleotide)n+m + AMP + beta-nicotinamide D-nucleotide.. Its function is as follows. DNA ligase that catalyzes the formation of phosphodiester linkages between 5'-phosphoryl and 3'-hydroxyl groups in double-stranded DNA using NAD as a coenzyme and as the energy source for the reaction. It is essential for DNA replication and repair of damaged DNA. The protein is DNA ligase of Aliarcobacter butzleri (strain RM4018) (Arcobacter butzleri).